The chain runs to 80 residues: UPF0181 protein SG1330 (80 aa).

The segment at 58 to 80 is disordered; that stretch reads TEVLETPAARAETDPYDSNPDDD.

It belongs to the UPF0181 family.

This is UPF0181 protein SG1330 from Sodalis glossinidius (strain morsitans).